The primary structure comprises 320 residues: uncharacterized protein (320 aa).

Arg61 is modified (omega-N-methylarginine). The tract at residues 299–320 (LHLQHQKQTSKDAGRQTPERKA) is disordered. A compositionally biased stretch (basic and acidic residues) spans 307-320 (TSKDAGRQTPERKA). Residue Thr315 is modified to Phosphothreonine.

This is an uncharacterized protein from Mus musculus (Mouse).